Consider the following 510-residue polypeptide: Maturase K (510 aa).

It belongs to the intron maturase 2 family. MatK subfamily.

Its subcellular location is the plastid. It is found in the chloroplast. In terms of biological role, usually encoded in the trnK tRNA gene intron. Probably assists in splicing its own and other chloroplast group II introns. This is Maturase K from Mammillaria haageana (Cactus).